The primary structure comprises 262 residues: Sepiapterin reductase (262 aa).

N-acetylmethionine is present on M1. NADP(+) is bound by residues 15–21 (GASRGFG) and 43–44 (RS). Phosphoserine is present on S46. 70 to 71 (DL) contacts NADP(+). Residues 158–159 (SL) and Y171 contribute to the substrate site. K175 serves as a coordination point for NADP(+). Phosphoserine is present on S196. G200 contacts substrate. 202-207 (LDTDMQ) is an NADP(+) binding site. Position 214 is a phosphoserine (S214). Residue D258 participates in substrate binding.

The protein belongs to the sepiapterin reductase family. As to quaternary structure, homodimer.

The protein resides in the cytoplasm. It catalyses the reaction L-erythro-7,8-dihydrobiopterin + NADP(+) = L-sepiapterin + NADPH + H(+). It carries out the reaction (6R)-L-erythro-5,6,7,8-tetrahydrobiopterin + 2 NADP(+) = 6-pyruvoyl-5,6,7,8-tetrahydropterin + 2 NADPH + 2 H(+). The catalysed reaction is (S)-benzoin + NADP(+) = benzil + NADPH + H(+). In terms of biological role, catalyzes the final one or two reductions in tetra-hydrobiopterin biosynthesis to form 5,6,7,8-tetrahydrobiopterin. The enzyme also catalyzes the reduction of benzil to (S)-benzoin. The protein is Sepiapterin reductase (SPR) of Meriones unguiculatus (Mongolian jird).